The chain runs to 565 residues: MTQSQGQDPRLDTSRTIRAPHGTTLRAKSWLTEAPLRMLMNNLDPDVAEHPHALVVYGGIGRAARNWACFDKIVEVLERLEDDQTLLVQSGKPVGVFPTHKNAPRVLIANSNLVPHWANWEHFNELDKQGLMMYGQMTAGSWIYIGSQGIVQGTYETFVAVAKKHFAGEAKGRWVLTGGLGGMGGAQPLAATMAGFSMIAVECDESRIDYRLRTGYVDKKATTLEEALAIVKESDTPVSVGLLGNAADVFAELVERNITPDVVTDQTSAHDPLNGYLPQGWSMAYAAEMRQQDESTVVKAAKQSMAVQVKAMLELQSRGAATLDYGNNIRQMALEEGVENAFDFPGFVPAYIRPLFCEGIGPFRWAALSGDPEDIYKTDQKVKELIPDNPHLHNWLDMARERIQFQGLPARICWVGLKDRERLGQAFNEMVKNGELKAPIVIGRDHLDSGSVASPNRETEGMMDGSDAVSDWPLLNALLNTAGGATWVSLHHGGGVGMGFSQHSGMVICCDGTEDASARIARVLHNDPATGVMRHADAGYDIAKQCAAQQGLDLPMLNEELSKLK.

Residues 58–59 (GG), Q136, 182–184 (GMG), E202, R207, 245–246 (NA), 266–270 (QTSAH), 276–277 (YL), and Y325 contribute to the NAD(+) site. C413 is an active-site residue. Residue G495 participates in NAD(+) binding.

It belongs to the urocanase family. NAD(+) serves as cofactor.

It is found in the cytoplasm. The enzyme catalyses 4-imidazolone-5-propanoate = trans-urocanate + H2O. It participates in amino-acid degradation; L-histidine degradation into L-glutamate; N-formimidoyl-L-glutamate from L-histidine: step 2/3. Functionally, catalyzes the conversion of urocanate to 4-imidazolone-5-propionate. The protein is Urocanate hydratase of Vibrio vulnificus (strain CMCP6).